A 466-amino-acid polypeptide reads, in one-letter code: Methylenetetrahydrofolate--tRNA-(uracil-5-)-methyltransferase TrmFO (466 aa).

10 to 15 (GGGLAG) serves as a coordination point for FAD.

Belongs to the MnmG family. TrmFO subfamily. FAD is required as a cofactor.

Its subcellular location is the cytoplasm. The catalysed reaction is uridine(54) in tRNA + (6R)-5,10-methylene-5,6,7,8-tetrahydrofolate + NADH + H(+) = 5-methyluridine(54) in tRNA + (6S)-5,6,7,8-tetrahydrofolate + NAD(+). The enzyme catalyses uridine(54) in tRNA + (6R)-5,10-methylene-5,6,7,8-tetrahydrofolate + NADPH + H(+) = 5-methyluridine(54) in tRNA + (6S)-5,6,7,8-tetrahydrofolate + NADP(+). Catalyzes the folate-dependent formation of 5-methyl-uridine at position 54 (M-5-U54) in all tRNAs. The protein is Methylenetetrahydrofolate--tRNA-(uracil-5-)-methyltransferase TrmFO of Phenylobacterium zucineum (strain HLK1).